Consider the following 29-residue polypeptide: MDILTLGWVSVLTLFTYSIAMVVWGRHGM.

A helical membrane pass occupies residues 3-23; the sequence is ILTLGWVSVLTLFTYSIAMVV.

It belongs to the PetN family. In terms of assembly, the 4 large subunits of the cytochrome b6-f complex are cytochrome b6, subunit IV (17 kDa polypeptide, PetD), cytochrome f and the Rieske protein, while the 4 small subunits are PetG, PetL, PetM and PetN. The complex functions as a dimer.

It localises to the cellular thylakoid membrane. In terms of biological role, component of the cytochrome b6-f complex, which mediates electron transfer between photosystem II (PSII) and photosystem I (PSI), cyclic electron flow around PSI, and state transitions. This chain is Cytochrome b6-f complex subunit 8, found in Acaryochloris marina (strain MBIC 11017).